Consider the following 157-residue polypeptide: DNA gyrase inhibitor (157 aa).

This sequence belongs to the DNA gyrase inhibitor family. In terms of assembly, interacts with DNA gyrase.

It localises to the cytoplasm. Its function is as follows. Inhibits the supercoiling activity of DNA gyrase. Acts by inhibiting DNA gyrase at an early step, prior to (or at the step of) binding of DNA by the gyrase. It protects cells against toxins that target DNA gyrase, by inhibiting activity of these toxins and reducing the formation of lethal double-strand breaks in the cell. The polypeptide is DNA gyrase inhibitor (Cronobacter turicensis (strain DSM 18703 / CCUG 55852 / LMG 23827 / z3032)).